Here is a 201-residue protein sequence, read N- to C-terminus: Casparian strip membrane protein 7 (201 aa).

The segment covering 1–11 (MEAGEEIEDGE) has biased composition (acidic residues). The segment at 1 to 26 (MEAGEEIEDGEPSTPTYKAHHPPPHL) is disordered. Topologically, residues 1 to 34 (MEAGEEIEDGEPSTPTYKAHHPPPHLPPPMRSSG) are cytoplasmic. Residues 35 to 55 (VSLVLSVADLVLRFVAIGGTA) traverse the membrane as a helical segment. Residues 56–86 (GSAIAMATTSETLPFAAPFVRFRAEYSDLPT) lie on the Extracellular side of the membrane. Residues 87 to 107 (LMFFVVASSVVCAYLVLSLPA) traverse the membrane as a helical segment. The Cytoplasmic segment spans residues 108–128 (SVVHVVRPGARSSRAILAFLD). A helical membrane pass occupies residues 129-149 (TVMLALLTASASAAAAIVYLA). Residues 150 to 171 (HRGSARANWLGICQQFTSFCQR) lie on the Extracellular side of the membrane. Residues 172–192 (ITASLVGSFAAAVVLVALVFL) traverse the membrane as a helical segment. The Cytoplasmic segment spans residues 193-201 (SALSLARRA).

The protein belongs to the Casparian strip membrane proteins (CASP) family. In terms of assembly, homodimer and heterodimers.

The protein localises to the cell membrane. Functionally, regulates membrane-cell wall junctions and localized cell wall deposition. Required for establishment of the Casparian strip membrane domain (CSD) and the subsequent formation of Casparian strips, a cell wall modification of the root endodermis that determines an apoplastic barrier between the intraorganismal apoplasm and the extraorganismal apoplasm and prevents lateral diffusion. In Oryza sativa subsp. japonica (Rice), this protein is Casparian strip membrane protein 7.